The following is a 323-amino-acid chain: Putative gluconeogenesis factor (323 aa).

The protein belongs to the gluconeogenesis factor family.

It is found in the cytoplasm. In terms of biological role, required for morphogenesis under gluconeogenic growth conditions. The chain is Putative gluconeogenesis factor from Thermoanaerobacterium thermosulfurigenes (Clostridium thermosulfurogenes).